The primary structure comprises 227 residues: Cytochrome c oxidase subunit 2 (227 aa).

The Mitochondrial intermembrane segment spans residues 1–14; that stretch reads MAYPLQLGFQDATS. The chain crosses the membrane as a helical span at residues 15 to 45; it reads PVMEELLHFHDHTLMIIFLISSLVLYIIMLM. Topologically, residues 46 to 59 are mitochondrial matrix; it reads LTTKLVHTNMMNVQ. Residues 60–87 traverse the membrane as a helical segment; the sequence is EMEMIWTILPAIILILIALPSLHTLYMM. The Mitochondrial intermembrane portion of the chain corresponds to 88–227; that stretch reads DEINNPLLTI…YFESWSASLA (140 aa). Cu cation contacts are provided by His161, Cys196, Glu198, Cys200, His204, and Met207. A Mg(2+)-binding site is contributed by Glu198. Position 218 is a phosphotyrosine (Tyr218).

This sequence belongs to the cytochrome c oxidase subunit 2 family. Component of the cytochrome c oxidase (complex IV, CIV), a multisubunit enzyme composed of 14 subunits. The complex is composed of a catalytic core of 3 subunits MT-CO1, MT-CO2 and MT-CO3, encoded in the mitochondrial DNA, and 11 supernumerary subunits COX4I, COX5A, COX5B, COX6A, COX6B, COX6C, COX7A, COX7B, COX7C, COX8 and NDUFA4, which are encoded in the nuclear genome. The complex exists as a monomer or a dimer and forms supercomplexes (SCs) in the inner mitochondrial membrane with NADH-ubiquinone oxidoreductase (complex I, CI) and ubiquinol-cytochrome c oxidoreductase (cytochrome b-c1 complex, complex III, CIII), resulting in different assemblies (supercomplex SCI(1)III(2)IV(1) and megacomplex MCI(2)III(2)IV(2)). Found in a complex with TMEM177, COA6, COX18, COX20, SCO1 and SCO2. Interacts with TMEM177 in a COX20-dependent manner. Interacts with COX20. Interacts with COX16. Cu cation is required as a cofactor.

Its subcellular location is the mitochondrion inner membrane. The catalysed reaction is 4 Fe(II)-[cytochrome c] + O2 + 8 H(+)(in) = 4 Fe(III)-[cytochrome c] + 2 H2O + 4 H(+)(out). Functionally, component of the cytochrome c oxidase, the last enzyme in the mitochondrial electron transport chain which drives oxidative phosphorylation. The respiratory chain contains 3 multisubunit complexes succinate dehydrogenase (complex II, CII), ubiquinol-cytochrome c oxidoreductase (cytochrome b-c1 complex, complex III, CIII) and cytochrome c oxidase (complex IV, CIV), that cooperate to transfer electrons derived from NADH and succinate to molecular oxygen, creating an electrochemical gradient over the inner membrane that drives transmembrane transport and the ATP synthase. Cytochrome c oxidase is the component of the respiratory chain that catalyzes the reduction of oxygen to water. Electrons originating from reduced cytochrome c in the intermembrane space (IMS) are transferred via the dinuclear copper A center (CU(A)) of subunit 2 and heme A of subunit 1 to the active site in subunit 1, a binuclear center (BNC) formed by heme A3 and copper B (CU(B)). The BNC reduces molecular oxygen to 2 water molecules using 4 electrons from cytochrome c in the IMS and 4 protons from the mitochondrial matrix. In Mammuthus primigenius (Siberian woolly mammoth), this protein is Cytochrome c oxidase subunit 2 (MT-CO2).